The primary structure comprises 356 residues: Cyanide hydratase (356 aa).

Positions 8 to 287 (YKAAAVNAEP…EGLLFVDIDL (280 aa)) constitute a CN hydrolase domain. Glu-48 (proton acceptor) is an active-site residue. Lys-130 is an active-site residue. Cys-165 serves as the catalytic Nucleophile.

This sequence belongs to the carbon-nitrogen hydrolase superfamily. Nitrilase family. Oligomer of dimers, forming left-handed helical fibers.

It catalyses the reaction formamide = hydrogen cyanide + H2O. In terms of biological role, catalyzes the hydration of cyanide to formamide. Degradation of cyanide may be important for plant pathogenic fungi in infection of cyanogenic plants. Can also transform some nitriles like 2-cyanopyridine and fumaronitrile. The protein is Cyanide hydratase of Aspergillus niger.